Reading from the N-terminus, the 242-residue chain is N-alpha-acetyltransferase 60 (242 aa).

The Cytoplasmic portion of the chain corresponds to 1 to 192 (MSEEERPAAL…GGHPPWTVMD (192 aa)). The N-acetyltransferase domain occupies 13-182 (TILRFLCHDD…DAYTYVLYLN (170 aa)). Tyrosine 38 is a binding site for substrate. Tyrosine 97 is a catalytic residue. Position 99 (leucine 99) interacts with substrate. Residues 101 to 103 (LGV) and 109 to 114 (KQGIGS) contribute to the acetyl-CoA site. Residue histidine 138 is part of the active site. Residues asparagine 143 and 150 to 153 (YENR) each bind acetyl-CoA. Positions 162 to 173 (PYYYSIRGVLQD) are required for homodimerization. Tyrosine 165 is a substrate binding site. Residues 193–236 (YLQHLGSALAGFSPCTLPQRIYRQAHTLLRSLLPWSSISAKSGI) constitute an intramembrane region (helical). Topologically, residues 237-242 (EYSRTM) are cytoplasmic.

This sequence belongs to the acetyltransferase family. NAA60 subfamily. As to quaternary structure, monomer and homodimer; monomer in presence of substrate and homodimer in its absence.

It localises to the golgi apparatus membrane. The enzyme catalyses N-terminal L-methionyl-[transmembrane protein] + acetyl-CoA = N-terminal N(alpha)-acetyl-L-methionyl-[transmembrane protein] + CoA + H(+). It catalyses the reaction L-lysyl-[protein] + acetyl-CoA = N(6)-acetyl-L-lysyl-[protein] + CoA + H(+). Functionally, N-alpha-acetyltransferase that specifically mediates the acetylation of N-terminal residues of the transmembrane proteins, with a strong preference for N-termini facing the cytosol. Displays N-terminal acetyltransferase activity towards a range of N-terminal sequences including those starting with Met-Lys, Met-Val, Met-Ala and Met-Met. Required for normal chromosomal segregation during anaphase. May also show histone acetyltransferase activity; such results are however unclear in vivo and would require additional experimental evidences. In Xenopus tropicalis (Western clawed frog), this protein is N-alpha-acetyltransferase 60 (naa60).